A 149-amino-acid polypeptide reads, in one-letter code: Myoglobin (149 aa).

Threonine 2 bears the N-acetylthreonine mark. One can recognise a Globin domain in the interval 2–143 (TEWEHVNKVW…ICSDLETLYK (142 aa)). Histidine 60 is a binding site for nitrite. Residue histidine 60 coordinates O2. Histidine 89 provides a ligand contact to heme b.

It belongs to the globin family. As to quaternary structure, monomeric.

The protein resides in the cytoplasm. Its subcellular location is the sarcoplasm. The catalysed reaction is Fe(III)-heme b-[protein] + nitric oxide + H2O = Fe(II)-heme b-[protein] + nitrite + 2 H(+). It carries out the reaction H2O2 + AH2 = A + 2 H2O. In terms of biological role, monomeric heme protein which primary function is to store oxygen and facilitate its diffusion within muscle tissues. Reversibly binds oxygen through a pentacoordinated heme iron and enables its timely and efficient release as needed during periods of heightened demand. Depending on the oxidative conditions of tissues and cells, and in addition to its ability to bind oxygen, it also has a nitrite reductase activity whereby it regulates the production of bioactive nitric oxide. Under stress conditions, like hypoxia and anoxia, it also protects cells against reactive oxygen species thanks to its pseudoperoxidase activity. The polypeptide is Myoglobin (mb) (Heterodontus portusjacksoni (Port Jackson shark)).